Consider the following 263-residue polypeptide: HTH-type transcriptional repressor NanR (263 aa).

The disordered stretch occupies residues 1-21; it reads MGLMNAFDSQTEDSSPVIGRN. The 69-residue stretch at 30–98 folds into the HTH gntR-type domain; the sequence is KKLSEMVEEE…NGERARVSRP (69 aa). Residues 58-77 constitute a DNA-binding region (H-T-H motif); the sequence is ERELMAFFNVGRPSVREALA.

This sequence belongs to the NanR family.

In terms of biological role, transcriptional repressor that controls expression of the genes required for the catabolism of sialic acids. This is HTH-type transcriptional repressor NanR from Escherichia coli O7:K1 (strain IAI39 / ExPEC).